The sequence spans 88 residues: Small ribosomal subunit protein uS15c (88 aa).

The protein belongs to the universal ribosomal protein uS15 family. In terms of assembly, part of the 30S ribosomal subunit.

It is found in the plastid. The protein resides in the chloroplast. This Aethionema cordifolium (Lebanon stonecress) protein is Small ribosomal subunit protein uS15c (rps15).